The following is a 528-amino-acid chain: MLKNILLCSLQISLLGMSLGGNVLIWPMEGSHWLNVKIIIDELLRKEHNVTVLVASGALFITPSSISPSLTFEIYPVPFGKEKIESVIKDFVLTWLENRPSPSTIWTFYKEMAKVIEEFHLVSRGICDGVLKNEKLMSKLQKEKFEVLLSDPVFPCGDIVALKLGIPFIYSLRFSPASTVEKHCGKVPFPPSYVPAILSELTDQMSFTDRVRNFISYRMQDYMFETLWKQWDSYYTKALGRPTTLCETMGKAEIWLMRTYWDFEFPRPYLPNFEFVGGLHCKPAKPLPKEMEEFVQTSGEHGIVVFSLGSMVKNLTDEKANLIASALAQIPQKVLWRYKGKIPDTLGSNTRLFDWIPQNDLLGHPKTRAFITHGGTNGIYEAIYHGIPMVGVPMFADQPDNIAHMKAKGAAVEVNMNTMTSSDLLNALRTVINEPSYKENAMRLSRIHHDQPVKPLDRAVFWIEFVMRHKGAKHLRVAAHDLSWFQYHSLDVIGFLLACVASAILLVAKCCLFIFQKVGKTGKKKKRD.

A signal peptide spans 1–21; that stretch reads MLKNILLCSLQISLLGMSLGG. At 22 to 494 the chain is on the extracellular side; that stretch reads NVLIWPMEGS…FQYHSLDVIG (473 aa). A glycan (N-linked (GlcNAc...) asparagine) is linked at Asn-49. Lys-135 carries the N6-succinyllysine modification. Asn-314 carries an N-linked (GlcNAc...) asparagine glycan. The chain crosses the membrane as a helical span at residues 495 to 515; the sequence is FLLACVASAILLVAKCCLFIF. Topologically, residues 516-528 are cytoplasmic; it reads QKVGKTGKKKKRD.

This sequence belongs to the UDP-glycosyltransferase family.

It is found in the membrane. The enzyme catalyses glucuronate acceptor + UDP-alpha-D-glucuronate = acceptor beta-D-glucuronoside + UDP + H(+). It catalyses the reaction 16beta,17beta-estriol + UDP-alpha-D-glucuronate = 16beta,17beta-estriol 16-O-(beta-D-glucuronate) + UDP + H(+). The catalysed reaction is 16alpha,17alpha-estriol + UDP-alpha-D-glucuronate = 16alpha,17alpha-estriol 16-O-(beta-D-glucuronate) + UDP + H(+). It carries out the reaction 17alpha-estradiol + UDP-alpha-D-glucuronate = 17alpha-estradiol 17-O-(beta-D-glucuronate) + UDP + H(+). The enzyme catalyses 17alpha-estradiol + UDP-alpha-D-glucuronate = 17alpha-estradiol 3-O-(beta-D-glucuronate) + UDP + H(+). It catalyses the reaction 17beta-estradiol + UDP-alpha-D-glucuronate = 17beta-estradiol 3-O-(beta-D-glucuronate) + UDP + H(+). The catalysed reaction is 17beta-estradiol + UDP-alpha-D-glucuronate = 17beta-estradiol 17-O-(beta-D-glucuronate) + UDP + H(+). It carries out the reaction testosterone + UDP-alpha-D-glucuronate = testosterone 17-O-(beta-D-glucuronate) + UDP + H(+). The enzyme catalyses epitestosterone + UDP-alpha-D-glucuronate = epitestosterone 17-O-(beta-D-glucuronate) + UDP + H(+). It catalyses the reaction lithocholate + UDP-alpha-D-glucuronate = lithocholoyl-3-O-(beta-D-glucuronate) + UDP + H(+). The catalysed reaction is lithocholate + UDP-alpha-D-glucuronate = lithocholoyl-24-O-(beta-D-glucuronate) + UDP. It carries out the reaction deoxycholate + UDP-alpha-D-glucuronate = deoxycholoyl-24-O-(beta-D-glucuronate) + UDP. The enzyme catalyses hyodeoxycholate + UDP-alpha-D-glucuronate = hyodeoxycholate 6-O-(beta-D-glucuronate) + UDP + H(+). It catalyses the reaction hyocholate + UDP-alpha-D-glucuronate = hyocholoyl-24-O-(beta-D-glucuronate) + UDP. Functionally, UDP-glucuronosyltransferase (UGT) that catalyzes phase II biotransformation reactions in which lipophilic substrates are conjugated with glucuronic acid to increase the metabolite's water solubility, thereby facilitating excretion into either the urine or bile. Essential for the elimination and detoxification of drugs, xenobiotics and endogenous compounds. Catalyzes the glucuronidation of endogenous steroid hormones such as androgens (testosterones) and estrogens (estradiol and estriol). Contributes to bile acid (BA) detoxification by catalyzing the glucuronidation of BA substrates, which are natural detergents for dietary lipids absorption. Shows a high affinity to aliphatic odorants such as citronellol as well as olfactory tissue specificity, and therefore may be involved in olfaction. In Mus musculus (Mouse), this protein is UDP-glucuronosyltransferase 2A1.